Consider the following 960-residue polypeptide: Protein mono-ADP-ribosyltransferase PARP10 (960 aa).

E103 bears the ADP-ribosyl glutamic acid mark. Positions 325–341 (SMGSTSPVDPVESSTEL) are enriched in polar residues. Residues 325-346 (SMGSTSPVDPVESSTELPEQVG) form a disordered region. S381 and S388 each carry phosphoserine. The segment at 553-576 (SPHGGEDRVPLEMEKEKPGGPGET) is disordered. Positions 555-570 (HGGEDRVPLEMEKEKP) are enriched in basic and acidic residues. The Ubiquitin-interacting motif lies at 604-621 (LEEEATLQLAIHRSLESQ). S617 carries the post-translational modification Phosphoserine. The interval 649–856 (DEDTGGEAQL…CAHGFNRSFC (208 aa)) is myc binding. The PARP catalytic domain maps to 755–960 (PNLSEQGLKE…TCKNILPGTP (206 aa)). The short motif at 780–787 (QDVVRAFY) is the PIP-box element. The residue at position 831 (E831) is an ADP-ribosyl glutamic acid.

Belongs to the ARTD/PARP family. In terms of assembly, interacts with MYC. Interacts with PARP14. Interacts (via-PIP box and ubiquitin-interacting motifs) with PCNA. Post-translationally, stimulated through its phosphorylation by CDK2. Acquires CDK-dependent phosphorylation through late-G1 to S phase, and from prometaphase to cytokinesis in the nucleolar organizing regions. Phosphorylation is suppressed in growth-arrested cells. Auto-mono-ADP-ribosylated on glutamate and lysine residues.

It is found in the cytoplasm. The protein localises to the nucleus. It carries out the reaction L-lysyl-[protein] + NAD(+) = N(6)-(ADP-D-ribosyl)-L-lysyl-[protein] + nicotinamide + H(+). It catalyses the reaction L-aspartyl-[protein] + NAD(+) = 4-O-(ADP-D-ribosyl)-L-aspartyl-[protein] + nicotinamide. The catalysed reaction is L-glutamyl-[protein] + NAD(+) = 5-O-(ADP-D-ribosyl)-L-glutamyl-[protein] + nicotinamide. Functionally, ADP-ribosyltransferase that mediates mono-ADP-ribosylation of glutamate and aspartate residues on target proteins. In contrast to PARP1 and PARP2, it is not able to mediate poly-ADP-ribosylation. Catalyzes mono-ADP-ribosylation of GSK3B, leading to negatively regulate GSK3B kinase activity. Involved in translesion DNA synthesis in response to DNA damage via its interaction with PCNA. This Mus musculus (Mouse) protein is Protein mono-ADP-ribosyltransferase PARP10.